We begin with the raw amino-acid sequence, 323 residues long: Malate dehydrogenase (323 aa).

Residues 20 to 25 (GAGRVG) and aspartate 44 contribute to the NAD(+) site. Substrate contacts are provided by arginine 93 and arginine 99. Residues asparagine 106 and 129 to 131 (VTN) each bind NAD(+). Residues asparagine 131 and arginine 162 each coordinate substrate. Histidine 186 acts as the Proton acceptor in catalysis.

The protein belongs to the LDH/MDH superfamily. MDH type 3 family.

It catalyses the reaction (S)-malate + NAD(+) = oxaloacetate + NADH + H(+). Catalyzes the reversible oxidation of malate to oxaloacetate. This chain is Malate dehydrogenase, found in Nostoc sp. (strain PCC 7120 / SAG 25.82 / UTEX 2576).